Here is a 364-residue protein sequence, read N- to C-terminus: Histidinol-phosphate aminotransferase (364 aa).

Lysine 226 is modified (N6-(pyridoxal phosphate)lysine).

This sequence belongs to the class-II pyridoxal-phosphate-dependent aminotransferase family. Histidinol-phosphate aminotransferase subfamily. As to quaternary structure, homodimer. It depends on pyridoxal 5'-phosphate as a cofactor.

It carries out the reaction L-histidinol phosphate + 2-oxoglutarate = 3-(imidazol-4-yl)-2-oxopropyl phosphate + L-glutamate. Its pathway is amino-acid biosynthesis; L-histidine biosynthesis; L-histidine from 5-phospho-alpha-D-ribose 1-diphosphate: step 7/9. In Campylobacter jejuni subsp. jejuni serotype O:2 (strain ATCC 700819 / NCTC 11168), this protein is Histidinol-phosphate aminotransferase.